The chain runs to 195 residues: Imidazoleglycerol-phosphate dehydratase (195 aa).

The protein belongs to the imidazoleglycerol-phosphate dehydratase family.

Its subcellular location is the cytoplasm. It catalyses the reaction D-erythro-1-(imidazol-4-yl)glycerol 3-phosphate = 3-(imidazol-4-yl)-2-oxopropyl phosphate + H2O. It functions in the pathway amino-acid biosynthesis; L-histidine biosynthesis; L-histidine from 5-phospho-alpha-D-ribose 1-diphosphate: step 6/9. The sequence is that of Imidazoleglycerol-phosphate dehydratase from Geobacter sulfurreducens (strain ATCC 51573 / DSM 12127 / PCA).